An 895-amino-acid polypeptide reads, in one-letter code: Androgen receptor (895 aa).

The interval 1–533 (MEVQLGLGRV…PIDYYFPPQK (533 aa)) is modulating. Residues 1–562 (MEVQLGLGRV…GSCKVFFKRA (562 aa)) are interaction with ZNF318. Disordered regions lie at residues 33–150 (VIQN…LSLL) and 175–211 (QLLQQQQQEAVSEGSSSGRAREASGAPTSSKDNYLGG). Composition is skewed to low complexity over residues 44 to 81 (AASAAPPGASLQQQQQQQQETSPRQQQQQQQGEDGSPQ) and 175 to 200 (QLLQQQQQEAVSEGSSSGRAREASGA). Ser65 carries the post-translational modification Phosphoserine; by CDK9. Position 79 is a phosphoserine (Ser79). Over residues 201 to 211 (PTSSKDNYLGG) the composition is skewed to polar residues. Phosphotyrosine; by CSK is present on Tyr208. At Ser241 the chain carries Phosphoserine. Tyr252 carries the phosphotyrosine; by CSK and TNK2 modification. 4 positions are modified to phosphotyrosine; by CSK: Tyr292, Tyr331, Tyr342, and Tyr347. The residue at position 348 (Tyr348) is a Phosphotyrosine; by CSK and TNK2. Lys371 is covalently cross-linked (Glycyl lysine isopeptide (Lys-Gly) (interchain with G-Cter in SUMO)). Tyr378 is subject to Phosphotyrosine; by CSK. Residue Lys496 forms a Glycyl lysine isopeptide (Lys-Gly) (interchain with G-Cter in SUMO) linkage. Phosphotyrosine; by CSK is present on residues Tyr510 and Tyr527. An interaction with LPXN region spans residues 527–894 (YYFPPQKTCL…GKVKPIYFHT (368 aa)). A DNA-binding region (nuclear receptor) is located at residues 534 to 607 (TCLICGDEAS…AGMTLGARKL (74 aa)). NR C4-type zinc fingers lie at residues 535–555 (CLICGDEASGCHYGALTCGSC) and 571–595 (CASRNDCTIDKFRRKNCPSCRLRKC). The interval 547–637 (YGALTCGSCK…TEETAQKLTV (91 aa)) is interaction with HIPK3. Residues 567–894 (QKYLCASRND…GKVKPIYFHT (328 aa)) are interaction with CCAR1. Positions 600–894 (MTLGARKLKK…GKVKPIYFHT (295 aa)) are interaction with KAT7. The residue at position 626 (Ser626) is a Phosphoserine; by STK4/MST1. The NR LBD domain maps to 644 to 875 (ECQPIFLNVL…DFPEMMAEII (232 aa)). Residues Asn681 and Arg728 each coordinate 17beta-hydroxy-5alpha-androstan-3-one. Glycyl lysine isopeptide (Lys-Gly) (interchain with G-Cter in ubiquitin) cross-links involve residues Lys821 and Lys823. 17beta-hydroxy-5alpha-androstan-3-one is bound at residue Thr853. Position 891 is a phosphotyrosine; by CSK (Tyr891).

It belongs to the nuclear hormone receptor family. NR3 subfamily. Binds DNA as a homodimer. Part of a ternary complex containing AR, EFCAB6/DJBP and PARK7. Interacts with HIPK3 and NR0B2 in the presence of androgen. The ligand binding domain interacts with KAT7/HBO1 in the presence of dihydrotestosterone. Interacts with EFCAB6/DJBP, PQBP1, RANBP9, RBAK, SPDEF, SRA1, TGFB1I1 and RREB1. Interacts with ZMIZ1/ZIMP10 and ZMIZ2/ZMIP7 which both enhance its transactivation activity. Interacts with SLC30A9 and RAD54L2/ARIP4. Interacts with MACROD1 (via macro domain). Interacts via the ligand-binding domain with LXXLL and FXXLF motifs from NCOA1, NCOA2, NCOA3 and MAGEA11. Interacts (via nuclear receptor DNA binding domain and nuclear receptor ligand binding domain) with NCOA4. The AR N-terminal poly-Gln region binds Ran resulting in enhancement of AR-mediated transactivation. Ran-binding decreases as the poly-Gln length increases. Interacts with HIP1 (via coiled coil domain). Interacts (via ligand-binding domain) with TRIM68. Interacts with TNK2. Interacts with USP26. Interacts with RNF6. Interacts (regulated by RNF6 probably through polyubiquitination) with RNF14; regulates AR transcriptional activity. Interacts with PRMT2 and TRIM24. Interacts with RACK1. Interacts with RANBP10; this interaction enhances dihydrotestosterone-induced AR transcriptional activity. Interacts with PRPF6 in a hormone-independent way; this interaction enhances dihydrotestosterone-induced AR transcriptional activity. Interacts with STK4/MST1. Interacts with ZIPK/DAPK3. Interacts with LPXN. Interacts with MAK. Part of a complex containing AR, MAK and NCOA3. Interacts with CRY1. Interacts with CCAR1 and GATA2. Interacts with ZNF318. Interacts with BUD31. Interacts with ARID4A. Interacts with ARID4B. Interacts (via NR LBD domain) with ZBTB7A; the interaction is direct and androgen-dependent. Interacts with NCOR1. Interacts with NCOR2. Interacts with CRY2 in a ligand-dependent manner. Post-translationally, phosphorylated in prostate cancer cells in response to several growth factors including EGF. Phosphorylation is induced by c-Src kinase (CSK). Tyr-510 is one of the major phosphorylation sites and an increase in phosphorylation and Src kinase activity is associated with prostate cancer progression. Phosphorylation by TNK2 enhances the DNA-binding and transcriptional activity. Phosphorylation at Ser-65 by CDK9 regulates AR promoter selectivity and cell growth. In terms of processing, sumoylated on Lys-371 (major) and Lys-496. Ubiquitinated. Deubiquitinated by USP26. 'Lys-6' and 'Lys-27'-linked polyubiquitination by RNF6 modulates AR transcriptional activity and specificity. Palmitoylated by ZDHHC7 and ZDHHC21. Palmitoylation is required for plasma membrane targeting and for rapid intracellular signaling via ERK and AKT kinases and cAMP generation.

It localises to the nucleus. It is found in the cytoplasm. Functionally, steroid hormone receptors are ligand-activated transcription factors that regulate eukaryotic gene expression and affect cellular proliferation and differentiation in target tissues. Transcription factor activity is modulated by bound coactivator and corepressor proteins like ZBTB7A that recruits NCOR1 and NCOR2 to the androgen response elements/ARE on target genes, negatively regulating androgen receptor signaling and androgen-induced cell proliferation. Transcription activation is also down-regulated by NR0B2. Activated, but not phosphorylated, by HIPK3 and ZIPK/DAPK3. The protein is Androgen receptor (AR) of Macaca fascicularis (Crab-eating macaque).